The primary structure comprises 309 residues: Elongation factor Ts (309 aa).

An involved in Mg(2+) ion dislocation from EF-Tu region spans residues 98-101 (TDFV).

It belongs to the EF-Ts family.

The protein resides in the cytoplasm. Functionally, associates with the EF-Tu.GDP complex and induces the exchange of GDP to GTP. It remains bound to the aminoacyl-tRNA.EF-Tu.GTP complex up to the GTP hydrolysis stage on the ribosome. This chain is Elongation factor Ts, found in Orientia tsutsugamushi (strain Boryong) (Rickettsia tsutsugamushi).